The following is a 67-amino-acid chain: Kappa-conotoxin-like Em11.8 (67 aa).

A signal peptide spans 1 to 26; that stretch reads MMFRLTSVSCFLLVIACLNLFQVVLT. Intrachain disulfides connect cysteine 29/cysteine 43, cysteine 36/cysteine 48, cysteine 42/cysteine 51, and cysteine 47/cysteine 55. Phenylalanine 59 is modified (phenylalanine amide). Residues 63 to 67 constitute a propeptide that is removed on maturation; the sequence is ATFQE.

The protein belongs to the conotoxin I2 superfamily. As to expression, expressed by the venom duct.

Its subcellular location is the secreted. Its function is as follows. Inhibits the vertebrate voltage-gated potassium channels Kv1.1/KCNA1 and Kv1.3/KCNA3. This Conus emaciatus (False virgin cone) protein is Kappa-conotoxin-like Em11.8.